Consider the following 644-residue polypeptide: Chaperone protein DnaK (644 aa).

A Phosphothreonine; by autocatalysis modification is found at threonine 199. The interval 589-644 (QALAEASHKLAEKMYSQGQGPQAGPGEEPSGQSGGTEKPVEGEVVDAEFEEVKNKK) is disordered. Low complexity predominate over residues 604-619 (SQGQGPQAGPGEEPSG).

The protein belongs to the heat shock protein 70 family.

Functionally, acts as a chaperone. The sequence is that of Chaperone protein DnaK from Nitrosospira multiformis (strain ATCC 25196 / NCIMB 11849 / C 71).